The chain runs to 302 residues: Sulfate adenylyltransferase subunit 2 (302 aa).

The protein belongs to the PAPS reductase family. CysD subfamily. In terms of assembly, heterodimer composed of CysD, the smaller subunit, and CysN.

The enzyme catalyses sulfate + ATP + H(+) = adenosine 5'-phosphosulfate + diphosphate. It participates in sulfur metabolism; hydrogen sulfide biosynthesis; sulfite from sulfate: step 1/3. In terms of biological role, with CysN forms the ATP sulfurylase (ATPS) that catalyzes the adenylation of sulfate producing adenosine 5'-phosphosulfate (APS) and diphosphate, the first enzymatic step in sulfur assimilation pathway. APS synthesis involves the formation of a high-energy phosphoric-sulfuric acid anhydride bond driven by GTP hydrolysis by CysN coupled to ATP hydrolysis by CysD. The polypeptide is Sulfate adenylyltransferase subunit 2 (Bacteroides thetaiotaomicron (strain ATCC 29148 / DSM 2079 / JCM 5827 / CCUG 10774 / NCTC 10582 / VPI-5482 / E50)).